The chain runs to 357 residues: 3-isopropylmalate dehydrogenase (357 aa).

76 to 89 (GPQWDTIDPSLRPE) serves as a coordination point for NAD(+). Substrate-binding residues include R96, R106, R134, and D224. Residues D224, D248, and D252 each contribute to the Mg(2+) site. 282-294 (GSAPDIAGKGIAN) is an NAD(+) binding site.

Belongs to the isocitrate and isopropylmalate dehydrogenases family. LeuB type 1 subfamily. In terms of assembly, homodimer. It depends on Mg(2+) as a cofactor. Mn(2+) serves as cofactor.

The protein localises to the cytoplasm. It catalyses the reaction (2R,3S)-3-isopropylmalate + NAD(+) = 4-methyl-2-oxopentanoate + CO2 + NADH. It functions in the pathway amino-acid biosynthesis; L-leucine biosynthesis; L-leucine from 3-methyl-2-oxobutanoate: step 3/4. In terms of biological role, catalyzes the oxidation of 3-carboxy-2-hydroxy-4-methylpentanoate (3-isopropylmalate) to 3-carboxy-4-methyl-2-oxopentanoate. The product decarboxylates to 4-methyl-2 oxopentanoate. The chain is 3-isopropylmalate dehydrogenase from Xanthomonas euvesicatoria pv. vesicatoria (strain 85-10) (Xanthomonas campestris pv. vesicatoria).